Here is a 186-residue protein sequence, read N- to C-terminus: MTKEKVFKKKSSILEWGKAIVIAVILALLIRNFLFEPYVVEGKSMDPTLVDSERLFVNKTVKYTGNFKRGDIIILNGKEKSTHYVKRLIGLPGDTVEMKNDHLFINGNEVKEPYLSYNKENAKKVGINLTGDFGPIKVPKDKYFVMGDNRQESMDSRNGLGLFTKDDIQGTEEFVFFPFSNMRKAK.

Residues Met-1–Glu-15 are Cytoplasmic-facing. The helical transmembrane segment at Trp-16–Phe-35 threads the bilayer. The Extracellular portion of the chain corresponds to Glu-36–Lys-186. Active-site residues include Ser-44 and Lys-86.

The protein belongs to the peptidase S26 family.

It is found in the cell membrane. The enzyme catalyses Cleavage of hydrophobic, N-terminal signal or leader sequences from secreted and periplasmic proteins.. This chain is Signal peptidase I P (sipP), found in Bacillus subtilis subsp. natto.